The chain runs to 63 residues: Large ribosomal subunit protein uL29 (63 aa).

It belongs to the universal ribosomal protein uL29 family.

The sequence is that of Large ribosomal subunit protein uL29 from Haemophilus influenzae (strain 86-028NP).